Reading from the N-terminus, the 346-residue chain is Protein pelota homolog (346 aa).

Belongs to the eukaryotic release factor 1 family. Pelota subfamily. In terms of assembly, monomer. It depends on a divalent metal cation as a cofactor.

Its subcellular location is the cytoplasm. May function in recognizing stalled ribosomes, interact with stem-loop structures in stalled mRNA molecules, and effect endonucleolytic cleavage of the mRNA. May play a role in the release non-functional ribosomes and degradation of damaged mRNAs. Has endoribonuclease activity. The chain is Protein pelota homolog from Ignicoccus hospitalis (strain KIN4/I / DSM 18386 / JCM 14125).